A 1288-amino-acid chain; its full sequence is SH3 domain and tetratricopeptide repeat-containing protein 2 (1288 aa).

SH3 domains are found at residues 176–240 (EGHF…PLPL) and 268–331 (IGRG…PDSY). Residues 386-395 (NPPNDLSASQ) show a composition bias toward polar residues. 2 disordered regions span residues 386 to 405 (NPPN…VRPG) and 410 to 444 (EHQA…LPEP). TPR repeat units follow at residues 528–561 (ARLC…LNGA), 757–790 (RALC…GQLL), 836–869 (GVIY…AQEV), 1001–1037 (GRLL…FIDL), 1084–1118 (LKLY…LARR), 1119–1152 (LKAV…ATLA), 1166–1199 (LVAF…CPPW), and 1210–1244 (AKVY…AVLL).

As to expression, strongly expressed in brain and spinal cord. Expressed at equal level in spinal cord and sciatic nerve. Weakly expressed in striated muscle.

This Homo sapiens (Human) protein is SH3 domain and tetratricopeptide repeat-containing protein 2 (SH3TC2).